A 405-amino-acid chain; its full sequence is Argininosuccinate synthase (405 aa).

ATP is bound at residue 11–19 (AYSGGLDTS). Tyrosine 90 serves as a coordination point for L-citrulline. Residue glycine 119 coordinates ATP. L-aspartate contacts are provided by threonine 121, asparagine 125, and aspartate 126. Asparagine 125 serves as a coordination point for L-citrulline. Positions 129, 178, 187, 263, and 275 each coordinate L-citrulline.

This sequence belongs to the argininosuccinate synthase family. Type 1 subfamily. In terms of assembly, homotetramer.

It localises to the cytoplasm. It carries out the reaction L-citrulline + L-aspartate + ATP = 2-(N(omega)-L-arginino)succinate + AMP + diphosphate + H(+). It functions in the pathway amino-acid biosynthesis; L-arginine biosynthesis; L-arginine from L-ornithine and carbamoyl phosphate: step 2/3. This Legionella pneumophila (strain Corby) protein is Argininosuccinate synthase.